The following is a 327-amino-acid chain: Probable 6-phosphogluconolactonase 3, chloroplastic (327 aa).

2 stretches are compositionally biased toward low complexity: residues 1 to 29 (MSAS…PASR) and 43 to 66 (VASR…PGGA). Residues 1 to 66 (MSASAAVSST…VYATASPGGA (66 aa)) form a disordered region. The N-terminal 71 residues, 1–71 (MSASAAVSST…SPGGAGGTTA (71 aa)), are a transit peptide targeting the chloroplast.

Belongs to the glucosamine/galactosamine-6-phosphate isomerase family. 6-phosphogluconolactonase subfamily.

The protein localises to the plastid. It localises to the chloroplast. The enzyme catalyses 6-phospho-D-glucono-1,5-lactone + H2O = 6-phospho-D-gluconate + H(+). It participates in carbohydrate degradation; pentose phosphate pathway; D-ribulose 5-phosphate from D-glucose 6-phosphate (oxidative stage): step 2/3. Functionally, hydrolysis of 6-phosphogluconolactone to 6-phosphogluconate. The protein is Probable 6-phosphogluconolactonase 3, chloroplastic of Oryza sativa subsp. indica (Rice).